Here is a 394-residue protein sequence, read N- to C-terminus: Junctional adhesion molecule-like (394 aa).

Positions 1–19 (MFCPLKLILLPVLLDYSLG) are cleaved as a signal peptide. 2 Ig-like V-type domains span residues 20–132 (LNDL…KAVV) and 137–250 (PEEP…IVLH). Residues 20 to 275 (LNDLNVSPPE…RPLVLGGNQL (256 aa)) lie on the Extracellular side of the membrane. 2 cysteine pairs are disulfide-bonded: C42-C116 and C155-C234. N76 and N231 each carry an N-linked (GlcNAc...) asparagine glycan. Residues 276 to 296 (VIIVGIVCATILLLPVLILIV) form a helical membrane-spanning segment. At 297–394 (KKTCGNKSSV…GGMPKTQQAF (98 aa)) the chain is on the cytoplasmic side. The interval 369 to 394 (PSLRSDRNNSLEKKSGGGMPKTQQAF) is disordered. Basic and acidic residues predominate over residues 372–383 (RSDRNNSLEKKS).

This sequence belongs to the immunoglobulin superfamily. In terms of assembly, homodimer; active form in leukocyte-endothelial cell adhesion. Interacts (homodimeric form) with CXADR. Interacts (via cytoplasmic domain) with the PI3 kinase; upon CXADR-binding. Interacts with ITGA4 and ITGB1; integrin alpha-4/beta-1 may regulate leukocyte to endothelial cells adhesion by controlling JAML homodimerization. Expression is restricted to the hematopoietic tissues with the exception of liver. Expressed in fetal liver, spleen and thymus. Preferentially expressed by mature leukocytes (at protein level).

Its subcellular location is the cell membrane. The protein localises to the cell junction. Its function is as follows. Transmembrane protein of the plasma membrane of leukocytes that control their migration and activation through interaction with CXADR, a plasma membrane receptor found on adjacent epithelial and endothelial cells. The interaction between both receptors mediates the activation of gamma-delta T-cells, a subpopulation of T-cells residing in epithelia and involved in tissue homeostasis and repair. Upon epithelial CXADR-binding, JAML induces downstream cell signaling events in gamma-delta T-cells through PI3-kinase and MAP kinases. It results in proliferation and production of cytokines and growth factors by T-cells that in turn stimulate epithelial tissues repair. It also controls the transmigration of leukocytes within epithelial and endothelial tissues through adhesive interactions with epithelial and endothelial CXADR. This chain is Junctional adhesion molecule-like, found in Homo sapiens (Human).